Here is a 1002-residue protein sequence, read N- to C-terminus: Eukaryotic translation initiation factor 5B (1002 aa).

Disordered regions lie at residues 1-172 (MAKK…GLAA) and 184-402 (EEQE…NKKD). The span at 13 to 23 (WDEEFEEDAAQ) shows a compositional bias: acidic residues. Polar residues predominate over residues 27-37 (ISATPTPNPES). Low complexity predominate over residues 47-57 (EASASAEGAEA). Composition is skewed to basic and acidic residues over residues 75-111 (KKVI…EQAA) and 120-154 (QKEK…ESDK). Residues 155-172 (PSASAKKPAKKVPAGLAA) are compositionally biased toward low complexity. Composition is skewed to basic and acidic residues over residues 184–252 (EEQE…ERRR) and 267–276 (AKKDGEENKP). Residues 277–287 (KKVVYSKKKKR) show a composition bias toward basic residues. A compositionally biased stretch (basic and acidic residues) spans 297–306 (IKSDSKKDSE). Composition is skewed to acidic residues over residues 307–342 (VVPD…EETQ) and 352–370 (DQNQ…EEEE). Over residues 381–398 (STPAATPAATPTPSSASP) the composition is skewed to low complexity. A tr-type G domain is found at 403 to 621 (LRSPICCILG…LLELTQKRMS (219 aa)). Ser405 is modified (phosphoserine). A G1 region spans residues 412–419 (GHVDTGKT). A K(+)-binding site is contributed by Asp415. Na(+) is bound at residue Asp415. Residues 415–420 (DTGKTK), Gln431, and 437–439 (GIT) contribute to the GTP site. Residue Thr419 participates in Mg(2+) binding. Gly437 is a K(+) binding site. Gly437 contacts Na(+). Residues 437–441 (GITQQ) are G2. Thr439 is a Mg(2+) binding site. The segment at 476–479 (DTPG) is G3. Residues 530 to 533 (NKID) and 599 to 600 (AV) each bind GTP. The tract at residues 530-533 (NKID) is G4. A G5 region spans residues 598 to 600 (SAV).

Belongs to the TRAFAC class translation factor GTPase superfamily. Classic translation factor GTPase family. IF-2 subfamily. The cofactor is Na(+). K(+) serves as cofactor.

The protein resides in the cytoplasm. The enzyme catalyses GTP + H2O = GDP + phosphate + H(+). In terms of biological role, plays a role in translation initiation. Translational GTPase that catalyzes the joining of the 40S and 60S subunits to form the 80S initiation complex with the initiator methionine-tRNA in the P-site base paired to the start codon. GTP binding and hydrolysis induces conformational changes in the enzyme that renders it active for productive interactions with the ribosome. The release of the enzyme after formation of the initiation complex is a prerequisite to form elongation-competent ribosomes. Stimulates 20S pre-rRNA cleavage to mature 18S rRNA by PIN-domain endonuclease NOB1. In Saccharomyces cerevisiae (strain ATCC 204508 / S288c) (Baker's yeast), this protein is Eukaryotic translation initiation factor 5B.